A 2809-amino-acid chain; its full sequence is Fibrillin-3 (2809 aa).

An N-terminal signal peptide occupies residues 1–31; that stretch reads MTLEGLYLARGPLARLLLAWSALLCMAGGQG. Residues 32-48 constitute a propeptide that is removed on maturation; sequence RWDGALEAAGPGRVRRR. Positions 147-179 constitute an EGF-like 1 domain; it reads GQPICDRGCHNGGRCIGPNRCACVYGFMGPQCE. Cystine bridges form between cysteine 151-cysteine 161, cysteine 155-cysteine 167, and cysteine 169-cysteine 178. Residues 185 to 237 form the TB 1 domain; that stretch reads GPCFGQVGPEGCQHQLTGLVCTKALCCATVGRAWGLPCELCPAQPHPCRRGFI. Positions 247 to 288 constitute an EGF-like 2; calcium-binding domain; that stretch reads DVDECQAVPGLCQGGSCVNMVGSFHCRCPVGHRLSDSSAACE. 3 disulfides stabilise this stretch: cysteine 251/cysteine 263, cysteine 258/cysteine 272, and cysteine 274/cysteine 287. The TB 2 domain maps to 293-346; the sequence is GACFSVLFGGRCAGDLAGHYTRRQCCCDRGRCWAAGPVPELCPPRGSNEFQQLC. Residue asparagine 406 is glycosylated (N-linked (GlcNAc...) asparagine). Residues 408–448 enclose the EGF-like 3 domain; the sequence is TIDICRHFTNLCLNGRCLPTPSSYRCECNVGYTQDVRGECI. Disulfide bonds link cysteine 412/cysteine 424, cysteine 419/cysteine 433, cysteine 435/cysteine 447, cysteine 453/cysteine 463, cysteine 458/cysteine 472, cysteine 474/cysteine 487, cysteine 493/cysteine 505, cysteine 500/cysteine 514, cysteine 516/cysteine 529, cysteine 535/cysteine 546, cysteine 541/cysteine 555, cysteine 557/cysteine 570, cysteine 576/cysteine 587, cysteine 582/cysteine 596, and cysteine 598/cysteine 611. The EGF-like 4; calcium-binding domain occupies 449–488; that stretch reads DVDECTSSPCHHGDCVNIPGTYHCRCYPGFQATPTRQACV. Positions 489-530 constitute an EGF-like 5; calcium-binding domain; the sequence is DVDECIVSGGLCHLGRCVNTEGSFQCVCNAGFELSPDGKNCV. The 41-residue stretch at 531–571 folds into the EGF-like 6; calcium-binding domain; it reads DHNECATSTMCVNGVCLNEDGSFSCLCKPGFLLAPGGHYCM. The EGF-like 7; calcium-binding domain maps to 572–612; the sequence is DIDECQTPGICVNGHCTNTEGSFRCQCLGGLAVGTDGRVCV. The TB 3 domain maps to 618–670; the sequence is STCYGAIEKGSCARPFPGTVTKSECCCANPDHGFGEPCQLCPAKDSAEFQALC. In terms of domain architecture, EGF-like 8; calcium-binding spans 682-723; it reads DINECALDPEVCANGVCENLRGSYRCVCNLGYEAGASGKDCT. 9 cysteine pairs are disulfide-bonded: cysteine 686-cysteine 698, cysteine 693-cysteine 707, cysteine 709-cysteine 722, cysteine 728-cysteine 740, cysteine 735-cysteine 749, cysteine 751-cysteine 764, cysteine 770-cysteine 780, cysteine 775-cysteine 789, and cysteine 791-cysteine 804. Residues 724 to 765 form the EGF-like 9; calcium-binding domain; that stretch reads DVDECALNSLLCDNGWCQNSPGSYSCSCPPGFHFWQDTEICK. The EGF-like 10; calcium-binding domain occupies 766 to 805; sequence DVDECLSSPCVSGVCRNLAGSYTCKCGPGSRLDPSGTFCL. Positions 810–861 constitute a TB 4 domain; that stretch reads GTCWLKIQESRCEVNLQGASLRSECCATLGAAWGSPCERCEIDPACARGFAR. The EGF-like 11; calcium-binding domain maps to 869–910; that stretch reads DVNECESFPGVCPNGRCVNTAGSFRCECPEGLMLDASGRLCV. 3 disulfides stabilise this stretch: cysteine 873-cysteine 885, cysteine 880-cysteine 894, and cysteine 896-cysteine 909. In terms of domain architecture, TB 5 spans 915 to 966; the sequence is EPCFLRWDEDECGVTLPGKYRMDVCCCSIGAVWGVECEACPDPESLEFASLC. The EGF-like 12; calcium-binding domain occupies 986–1027; sequence DVNECKVFPGLCTHGTCRNTVGSFHCACAGGFALDAQERNCT. Disulfide bonds link cysteine 990-cysteine 1002, cysteine 997-cysteine 1011, cysteine 1013-cysteine 1026, cysteine 1032-cysteine 1044, cysteine 1039-cysteine 1053, cysteine 1055-cysteine 1069, cysteine 1075-cysteine 1087, cysteine 1082-cysteine 1096, cysteine 1098-cysteine 1111, cysteine 1117-cysteine 1129, cysteine 1124-cysteine 1138, cysteine 1140-cysteine 1153, cysteine 1159-cysteine 1170, cysteine 1166-cysteine 1179, cysteine 1181-cysteine 1194, cysteine 1200-cysteine 1212, cysteine 1207-cysteine 1221, cysteine 1223-cysteine 1236, cysteine 1242-cysteine 1254, cysteine 1249-cysteine 1263, cysteine 1265-cysteine 1278, cysteine 1284-cysteine 1297, cysteine 1291-cysteine 1306, cysteine 1308-cysteine 1319, cysteine 1325-cysteine 1338, cysteine 1332-cysteine 1347, cysteine 1349-cysteine 1360, cysteine 1366-cysteine 1378, cysteine 1373-cysteine 1387, cysteine 1389-cysteine 1402, cysteine 1408-cysteine 1419, cysteine 1414-cysteine 1428, cysteine 1430-cysteine 1443, cysteine 1449-cysteine 1460, cysteine 1455-cysteine 1469, and cysteine 1471-cysteine 1484. Asparagine 1025 is a glycosylation site (N-linked (GlcNAc...) asparagine). The EGF-like 13; calcium-binding domain occupies 1028–1070; it reads DIDECRISPDLCGQGTCVNTPGSFECECFPGYESGFMLMKNCM. The EGF-like 14; calcium-binding domain occupies 1071 to 1112; sequence DVDECARDPLLCRGGTCTNTDGSYKCQCPPGHELTAKGTACE. Residues 1113-1154 enclose the EGF-like 15; calcium-binding domain; it reads DIDECSLSDGLCPHGQCVNVIGAFQCSCHAGFQSTPDRQGCV. The EGF-like 16; calcium-binding domain maps to 1155–1195; that stretch reads DINECRVQNGGCDVHCINTEGSYRCSCGQGYSLMPDGRACA. The EGF-like 17 domain maps to 1196-1237; that stretch reads DVDECEENPRVCDQGHCTNMPGGHRCLCYDGFMATPDMRTCV. One can recognise an EGF-like 18; calcium-binding domain in the interval 1238 to 1279; the sequence is DVDECDLNPHICLHGDCENTKGSFVCHCQLGYMVRKGATGCS. An EGF-like 19; calcium-binding domain is found at 1280-1320; the sequence is DVDECEVGGHNCDSHASCLNIPGSFSCRCLPGWVGDGFECH. An EGF-like 20; calcium-binding domain is found at 1321 to 1361; it reads DLDECVSQEHRCSPRGDCLNVPGSYRCTCRQGFAGDGFFCE. The EGF-like 21; calcium-binding domain occupies 1362 to 1403; the sequence is DRDECAENVDLCDNGQCLNAPGGYRCECEMGFDPTEDHRACQ. An EGF-like 22; calcium-binding domain is found at 1404–1444; it reads DVDECAQGNLCAFGSCENLPGMFRCICNGGYELDRGGGNCT. Residue asparagine 1442 is glycosylated (N-linked (GlcNAc...) asparagine). The EGF-like 23; calcium-binding domain maps to 1445-1485; the sequence is DINECADPVNCINGVCINTPGSYLCSCPQDFELNPSGVGCV. In terms of domain architecture, TB 6 spans 1490-1546; the sequence is GNCFLETHDRGDSGISCSAEIGVGVTRASCCCSLGRAWGNPCELCPMANTTEYRTLC. An N-linked (GlcNAc...) asparagine glycan is attached at asparagine 1538. The region spanning 1563–1604 is the EGF-like 24; calcium-binding domain; that stretch reads DIDECQELPGLCQGGDCVNTFGSFQCECPPGYHLSEHTRICE. 6 disulfides stabilise this stretch: cysteine 1567–cysteine 1579, cysteine 1574–cysteine 1588, cysteine 1590–cysteine 1603, cysteine 1609–cysteine 1621, cysteine 1616–cysteine 1630, and cysteine 1632–cysteine 1645. Residues 1605–1646 form the EGF-like 25; calcium-binding domain; that stretch reads DIDECSTHSGICGPGTCYNTLGNYTCVCPAEYLQVNGGNNCM. Asparagine 1627 is a glycosylation site (N-linked (GlcNAc...) asparagine). In terms of domain architecture, TB 7 spans 1651 to 1703; sequence SVCFRHYNGTCQNELAFNVTRKMCCCSYNIGQAWNRPCEACPTPISPDYQILC. N-linked (GlcNAc...) asparagine glycosylation is found at asparagine 1658 and asparagine 1668. The 42-residue stretch at 1721–1762 folds into the EGF-like 26; calcium-binding domain; the sequence is DIDECGEIPAICANGICINQIGSFRCECPAGFNYNSILLACE. 21 cysteine pairs are disulfide-bonded: cysteine 1725/cysteine 1737, cysteine 1732/cysteine 1746, cysteine 1748/cysteine 1761, cysteine 1767/cysteine 1780, cysteine 1774/cysteine 1789, cysteine 1791/cysteine 1803, cysteine 1809/cysteine 1821, cysteine 1816/cysteine 1830, cysteine 1832/cysteine 1845, cysteine 1851/cysteine 1861, cysteine 1856/cysteine 1870, cysteine 1872/cysteine 1884, cysteine 1890/cysteine 1903, cysteine 1898/cysteine 1912, cysteine 1914/cysteine 1927, cysteine 1933/cysteine 1945, cysteine 1940/cysteine 1954, cysteine 1956/cysteine 1967, cysteine 1973/cysteine 1985, cysteine 1980/cysteine 1994, and cysteine 1996/cysteine 2009. The EGF-like 27; calcium-binding domain maps to 1763–1804; it reads DVDECGSRESPCQQNADCINIPGSYRCKCTRGYKLSPGGACV. The EGF-like 28 domain maps to 1805-1846; that stretch reads GRNECREIPNVCSHGDCMDTEGSYMCLCHRGFQASADQTLCM. In terms of domain architecture, EGF-like 29; calcium-binding spans 1847–1885; the sequence is DIDECDRQPCGNGTCKNIIGSYNCLCFPGFVVTHNGDCV. N-linked (GlcNAc...) asparagine glycosylation occurs at asparagine 1858. The EGF-like 30; calcium-binding domain maps to 1886–1928; sequence DFDECTTLVGQVCRFGHCLNTAGSFHCLCQDGFELTADGKNCV. The 40-residue stretch at 1929-1968 folds into the EGF-like 31; calcium-binding domain; sequence DTNECLSLAGTCLPGTCQNLEGSFRCICPPGFQVQSDHCI. In terms of domain architecture, EGF-like 32; calcium-binding spans 1969 to 2010; it reads DIDECSEEPNLCLFGTCTNSPGSFQCLCPPGFVLSDNGHRCF. One can recognise a TB 8 domain in the interval 2015–2068; it reads SFCFTRFEAGKCSVPKAFNTTKTRCCCSKRPGEGWGDPCELCPQEGSAAFQELC. Asparagine 2033 carries an N-linked (GlcNAc...) asparagine glycan. The EGF-like 33; calcium-binding domain maps to 2084–2125; sequence DVNECAENPGVCTNGVCVNTDGSFRCECPFGYSLDFTGINCV. Intrachain disulfides connect cysteine 2088/cysteine 2100, cysteine 2095/cysteine 2109, cysteine 2111/cysteine 2124, cysteine 2130/cysteine 2141, cysteine 2136/cysteine 2150, cysteine 2152/cysteine 2164, cysteine 2170/cysteine 2181, cysteine 2177/cysteine 2190, cysteine 2192/cysteine 2205, cysteine 2211/cysteine 2225, cysteine 2218/cysteine 2234, cysteine 2236/cysteine 2250, cysteine 2256/cysteine 2268, cysteine 2263/cysteine 2277, and cysteine 2279/cysteine 2292. One can recognise an EGF-like 34; calcium-binding domain in the interval 2126-2165; sequence DTDECSVGHPCGQGTCTNVIGGFECACADGFEPGLMMTCE. Positions 2166–2206 constitute an EGF-like 35; calcium-binding domain; that stretch reads DIDECSLNPLLCAFRCHNTEGSYLCTCPAGYTLREDGAMCR. The 45-residue stretch at 2207–2251 folds into the EGF-like 36; calcium-binding domain; the sequence is DVDECADGQQDCHARGMECKNLIGTFACVCPPGMRPLPGSGEGCT. Positions 2252 to 2293 constitute an EGF-like 37; calcium-binding domain; that stretch reads DDNECHAQPDLCVNGRCVNTAGSFRCDCDEGFQPSPTLTECH. The region spanning 2298–2351 is the TB 9 domain; sequence GPCFAEVLQTMCRSLSSSSEAVTRAECCCGGGRGWGPRCELCPLPGTSAYRKLC. An EGF-like 38; calcium-binding domain is found at 2363 to 2404; the sequence is DVDECRMLAHLCAHGECINSLGSFRCHCQAGYTPDATATTCL. Cystine bridges form between cysteine 2367-cysteine 2379, cysteine 2374-cysteine 2388, cysteine 2390-cysteine 2403, cysteine 2409-cysteine 2420, cysteine 2416-cysteine 2429, cysteine 2431-cysteine 2444, cysteine 2450-cysteine 2461, cysteine 2457-cysteine 2470, cysteine 2472-cysteine 2483, cysteine 2489-cysteine 2502, cysteine 2496-cysteine 2511, cysteine 2513-cysteine 2526, cysteine 2532-cysteine 2542, cysteine 2538-cysteine 2551, cysteine 2553-cysteine 2566, cysteine 2572-cysteine 2584, cysteine 2579-cysteine 2593, cysteine 2595-cysteine 2608, cysteine 2614-cysteine 2625, cysteine 2621-cysteine 2634, and cysteine 2636-cysteine 2648. Positions 2405–2445 constitute an EGF-like 39; calcium-binding domain; the sequence is DMDECSQVPKPCTFLCKNTKGSFLCSCPRGYLLEEDGRTCK. In terms of domain architecture, EGF-like 40; calcium-binding spans 2446 to 2484; that stretch reads DLDECTSRQHNCQFLCVNTVGAFTCRCPPGFTQHHQACF. In terms of domain architecture, EGF-like 41; calcium-binding spans 2485–2527; sequence DNDECSAQPGPCGAHGHCHNTPGSFRCECHQGFTLVSSGHGCE. An EGF-like 42; calcium-binding domain is found at 2528-2567; that stretch reads DVNECDGPHRCQHGCQNQLGGYRCSCPQGFTQHSQWAQCV. The region spanning 2568-2609 is the EGF-like 43; calcium-binding domain; it reads DENECALSPPTCGSASCRNTLGGFRCVCPSGFDFDQALGGCQ. The EGF-like 44; calcium-binding domain occupies 2610–2649; sequence EVDECAGRRGPCSYSCANTPGGFLCGCPQGYFRAGQGHCV. A glycan (N-linked (GlcNAc...) asparagine) is linked at asparagine 2713.

This sequence belongs to the fibrillin family. Probably forms intermolecular disulfide bonds either with other FBN3 molecules or with other components of the microfibrils. Predominantly expressed in connective tissues such as skeletal muscle, tendon, skin, perichondrium and periosteum. Highly expressed in fetal lung, brain, kidney. Expressed at low level in prostate, testis, mammary gland, uterus, ovary, placenta, bladder, adrenal gland, thyroid, fetal thymus, fetal liver, liver, fetal heart and heart.

It localises to the secreted. The protein resides in the extracellular space. It is found in the extracellular matrix. In terms of biological role, fibrillins are structural components of 10-12 nm extracellular calcium-binding microfibrils, which occur either in association with elastin or in elastin-free bundles. Fibrillin-containing microfibrils provide long-term force bearing structural support. This chain is Fibrillin-3 (FBN3), found in Homo sapiens (Human).